The sequence spans 242 residues: Pyridoxine 5'-phosphate synthase (242 aa).

3-amino-2-oxopropyl phosphate is bound at residue N7. 9 to 10 (DH) is a 1-deoxy-D-xylulose 5-phosphate binding site. R18 is a binding site for 3-amino-2-oxopropyl phosphate. Catalysis depends on H43, which acts as the Proton acceptor. 2 residues coordinate 1-deoxy-D-xylulose 5-phosphate: R45 and H50. E70 acts as the Proton acceptor in catalysis. T100 lines the 1-deoxy-D-xylulose 5-phosphate pocket. H190 (proton donor) is an active-site residue. 3-amino-2-oxopropyl phosphate-binding positions include G191 and 212–213 (GH).

This sequence belongs to the PNP synthase family. In terms of assembly, homooctamer; tetramer of dimers.

The protein resides in the cytoplasm. The catalysed reaction is 3-amino-2-oxopropyl phosphate + 1-deoxy-D-xylulose 5-phosphate = pyridoxine 5'-phosphate + phosphate + 2 H2O + H(+). Its pathway is cofactor biosynthesis; pyridoxine 5'-phosphate biosynthesis; pyridoxine 5'-phosphate from D-erythrose 4-phosphate: step 5/5. Catalyzes the complicated ring closure reaction between the two acyclic compounds 1-deoxy-D-xylulose-5-phosphate (DXP) and 3-amino-2-oxopropyl phosphate (1-amino-acetone-3-phosphate or AAP) to form pyridoxine 5'-phosphate (PNP) and inorganic phosphate. The polypeptide is Pyridoxine 5'-phosphate synthase (Thermodesulfovibrio yellowstonii (strain ATCC 51303 / DSM 11347 / YP87)).